The following is a 145-amino-acid chain: 3-dehydroquinate dehydratase (145 aa).

The active-site Proton acceptor is the tyrosine 23. Asparagine 73, histidine 79, and aspartate 86 together coordinate substrate. The active-site Proton donor is histidine 99. Substrate-binding positions include 100 to 101 (LS) and arginine 110.

The protein belongs to the type-II 3-dehydroquinase family. Homododecamer.

The enzyme catalyses 3-dehydroquinate = 3-dehydroshikimate + H2O. It functions in the pathway metabolic intermediate biosynthesis; chorismate biosynthesis; chorismate from D-erythrose 4-phosphate and phosphoenolpyruvate: step 3/7. Catalyzes a trans-dehydration via an enolate intermediate. The chain is 3-dehydroquinate dehydratase from Desulfitobacterium hafniense (strain Y51).